Consider the following 593-residue polypeptide: MGTNNTSNNNGTTKKMSLEEFLGNDTLGESVWDEEDINLDAISNTTNIDILKQTKAGEHQRDGHQQHPHGGHGPMNRSRFSNAGPFGGGSMGDFANHHHPLQHQQGPPYIVKFSDLPPRFSNFDIEDLFQAKFTKFIKFKLFWEINKNPSISTLKSGSIFDQNFKRDSKVAFVELYTSRDMDKILNYWTTPLKEIYHITTAPAEFEDFKDYSTKVKLLTDPKDDAGKPFITKTQRSKSNPFGSAKPVDTQSKILDIEEKMENLHVEDTTTLRASLIPSSDSMATTATGSKITILKKQTPTEEESHSATPTPKPLSYSEVVERSVVNETSKKGTPLSKLDSPALELQSKPDKSDEFKGGDEQGFEKGGDDKAQLDVSNDKDKGSETDVDKQFTFKNVEREHSMSRTKYNGNHNNNNGNFRGSNRYRGGPNGSSYKGGHNNRGNRGGYRGGSSYNNNNNNTNDNNNNNNNSSSNNNNGSRYHDRQNNEEGLTSDSSLDASGNKKNDFTNSTSNTQQYSIFKPASGFLGQGNNDSIRNNGRGNYNSSGMNGGSRGRGFGRGRGFGRGAYNNRGSRGGRGSSGNYSNYNNRTTDMPL.

Basic and acidic residues predominate over residues 56-65 (AGEHQRDGHQ). The tract at residues 56 to 101 (AGEHQRDGHQQHPHGGHGPMNRSRFSNAGPFGGGSMGDFANHHHPL) is disordered. A phosphoserine mark is found at serine 150 and serine 238. Disordered stretches follow at residues 227-248 (KPFITKTQRSKSNPFGSAKPVD) and 280-593 (DSMA…DMPL). Polar residues-rich tracts occupy residues 231–241 (TKTQRSKSNPF) and 280–290 (DSMATTATGSK). Serine 340 is modified (phosphoserine). The segment covering 347–402 (SKPDKSDEFKGGDEQGFEKGGDDKAQLDVSNDKDKGSETDVDKQFTFKNVEREHSM) has biased composition (basic and acidic residues). Residues 408–426 (NGNHNNNNGNFRGSNRYRG) are compositionally biased toward low complexity. Omega-N-methylarginine occurs at positions 419, 425, and 440. Arginine 443 is modified (dimethylated arginine). Omega-N-methylarginine is present on arginine 447. Over residues 449–477 (GSSYNNNNNNTNDNNNNNNNSSSNNNNGS) the composition is skewed to low complexity. 2 stretches are compositionally biased toward polar residues: residues 486 to 497 (EEGLTSDSSLDA) and 505 to 516 (FTNSTSNTQQYS). A Phosphoserine modification is found at serine 522. Low complexity predominate over residues 534 to 545 (RNNGRGNYNSSG). Residues arginine 538, arginine 551, and arginine 575 each carry the omega-N-methylarginine modification. The segment covering 546 to 563 (MNGGSRGRGFGRGRGFGR) has biased composition (gly residues). Positions 578–587 (SGNYSNYNNR) are enriched in low complexity.

The protein localises to the cytoplasm. The protein resides in the P-body. It is found in the stress granule. Its function is as follows. DNA polymerase alpha mutation suppressor. Suppressor of group II intron splicing defects of a mutation in MRS2. May play a role in mitochondrial mRNA splicing. The protein is Protein PSP2 of Saccharomyces cerevisiae (strain ATCC 204508 / S288c) (Baker's yeast).